Here is a 104-residue protein sequence, read N- to C-terminus: Thiosulfate sulfurtransferase PspE (104 aa).

A signal peptide spans 1-19 (MFKKGLLALALVFSLPVFA). In terms of domain architecture, Rhodanese spans 20 to 104 (AEHWIDVRVP…KDIAMPKVKG (85 aa)). Catalysis depends on C67, which acts as the Cysteine persulfide intermediate.

Monomer.

Its subcellular location is the periplasm. It catalyses the reaction thiosulfate + hydrogen cyanide = thiocyanate + sulfite + 2 H(+). Its activity is regulated as follows. Inhibited by thiosulfate above 100 mM, particularly at low cyanide concentrations (&lt;5 mM). Inhibited by sodium sulfate or sodium chloride at 0.25 M which gives around 50% inhibition of rhodanese activity. Addition of sodium phosphate at the same concentration results in about 65% inhibition. Sulfite strongly inhibits PspE activity (1 mM sodium sulfite resulted in more than 50% inhibition of rhodanese activity). In terms of biological role, the phage shock protein (psp) operon (pspABCDE) may play a significant role in the competition for survival under nutrient- or energy-limited conditions. PspE catalyzes the sulfur-transfer reaction from thiosulfate to cyanide, to form sulfite and thiocyanate. Also able to use dithiol (dithiothreitol) as an alternate sulfur acceptor. Also possesses a very low mercaptopyruvate sulfurtransferase activity. This chain is Thiosulfate sulfurtransferase PspE (pspE), found in Escherichia coli (strain K12).